A 154-amino-acid chain; its full sequence is SsrA-binding protein (154 aa).

Positions 135 to 154 are disordered; that stretch reads KREDLKRRQDQRDMARAMKR.

The protein belongs to the SmpB family.

It is found in the cytoplasm. Its function is as follows. Required for rescue of stalled ribosomes mediated by trans-translation. Binds to transfer-messenger RNA (tmRNA), required for stable association of tmRNA with ribosomes. tmRNA and SmpB together mimic tRNA shape, replacing the anticodon stem-loop with SmpB. tmRNA is encoded by the ssrA gene; the 2 termini fold to resemble tRNA(Ala) and it encodes a 'tag peptide', a short internal open reading frame. During trans-translation Ala-aminoacylated tmRNA acts like a tRNA, entering the A-site of stalled ribosomes, displacing the stalled mRNA. The ribosome then switches to translate the ORF on the tmRNA; the nascent peptide is terminated with the 'tag peptide' encoded by the tmRNA and targeted for degradation. The ribosome is freed to recommence translation, which seems to be the essential function of trans-translation. This Microcystis aeruginosa (strain NIES-843 / IAM M-2473) protein is SsrA-binding protein.